The primary structure comprises 250 residues: Expansin-like B1 (250 aa).

Residues 1-24 (MKHSHVLLLLFVQVIVLLPLLCLS) form the signal peptide. Residues 45 to 149 (RGHCGYGEFG…QRIPCRYAGY (105 aa)) enclose the Expansin-like EG45 domain. A glycan (N-linked (GlcNAc...) asparagine) is linked at Asn72. Residues 163-245 (HYLAILVLYV…DWTAGATYDS (83 aa)) enclose the Expansin-like CBD domain.

It belongs to the expansin family. Expansin-like B subfamily.

The protein resides in the secreted. The chain is Expansin-like B1 (EXLB1) from Arabidopsis thaliana (Mouse-ear cress).